A 420-amino-acid chain; its full sequence is MSNINKILDPNSRMVSGPLNVVRLEGNFYGIKKVLYLFMDYHADVSDQTQCENIFSEDVQKYFAKTFYKLNDSNKIYDFFLEVFPTEIAQDIYSDDVPEIDHKEMYIEEVVKLFKKLFRYDPKKNRVLMNNITKNIRLHYIDIRDYYKNNVHNRTADMNIIARNFMVKGNIKVSQLNKIIKLMKIIRNHLEEIVEILEYSPKNNKSQRSKIIKTRDYDDLDIQTIEYLARKIKSTYKYQDVKKIMNMLLQQSIDNFKSTIKNIDESIKIFTNYAKQISESTDKLVRDPNTSYVYVYGLSPYTIRNMIVDIANRVDKIMDEQLIEFFARFTDIFFLRRFLDKDYITNGIIYTGALHSNTYINVLVKYFDFKVTHFSYSKISNPQLLTSEIKKRSLMEIQELILPNSFGQCSDMNSFPKEFQ.

The protein belongs to the mimivirus R160 family.

It localises to the virion. This is an uncharacterized protein from Acanthamoeba polyphaga mimivirus (APMV).